The following is a 49-amino-acid chain: Large ribosomal subunit protein eL40 (49 aa).

Belongs to the eukaryotic ribosomal protein eL40 family.

The polypeptide is Large ribosomal subunit protein eL40 (Archaeoglobus fulgidus (strain ATCC 49558 / DSM 4304 / JCM 9628 / NBRC 100126 / VC-16)).